The chain runs to 307 residues: Taste receptor type 2 member 10 (307 aa).

Residues 1-6 (MLSVVE) are Extracellular-facing. A helical transmembrane segment spans residues 7–27 (GILILVVISESVFGVLGNGFI). Over 28 to 42 (GLVNCIDCAKNKLST) the chain is Cytoplasmic. Residues 43 to 63 (IGFILTGLAISRIFLIWIIIT) traverse the membrane as a helical segment. Over 64–100 (DGFIQIFSPDVYASGNLIEYISYFWVITNQSSIWFAT) the chain is Extracellular. N92 carries an N-linked (GlcNAc...) asparagine glycan. Residues 101-121 (SLSIFYFLKIANFSNYIFLWL) traverse the membrane as a helical segment. The Cytoplasmic segment spans residues 122–126 (KSRIN). The helical transmembrane segment at 127–147 (RVLPLLMGFLLISCLLNFAYI) threads the bilayer. Residues 148–179 (VKILNDLKMKNDTVWRLNMYKSEYFIKQLLLN) are Extracellular-facing. N158 is a glycosylation site (N-linked (GlcNAc...) asparagine). The helical transmembrane segment at 180-200 (LGVIFFFTLSLITSVLLIISL) threads the bilayer. Residues 201-227 (WRHNRQMQSNVTGLRDSITEAHVKAMK) lie on the Cytoplasmic side of the membrane. A helical transmembrane segment spans residues 228 to 248 (VLISFIILFILYFIGIAIEIS). Over 249–257 (YFTVPENKL) the chain is Extracellular. Residues 258 to 278 (LLIFGMTTTAIYPWGHSFILI) traverse the membrane as a helical segment. Residues 279 to 307 (LGNSKLKQASLRVLQQLKCCEERKNLRAT) are Cytoplasmic-facing.

Belongs to the G-protein coupled receptor T2R family.

It localises to the membrane. Functionally, receptor that may play a role in the perception of bitterness and is gustducin-linked. May play a role in sensing the chemical composition of the gastrointestinal content. The activity of this receptor may stimulate alpha gustducin, mediate PLC-beta-2 activation and lead to the gating of TRPM5. The polypeptide is Taste receptor type 2 member 10 (TAS2R10) (Papio hamadryas (Hamadryas baboon)).